The following is a 393-amino-acid chain: S-adenosylmethionine synthase (393 aa).

Position 10 (Glu10) interacts with Mg(2+). His16 serves as a coordination point for ATP. A K(+)-binding site is contributed by Glu44. 2 residues coordinate L-methionine: Glu57 and Gln100. ATP contacts are provided by residues 168–170 (DGK), 236–239 (SGRF), Asp247, 253–254 (RK), Ala270, Lys274, and Lys278. L-methionine is bound at residue Asp247. Residue Lys278 coordinates L-methionine.

This sequence belongs to the AdoMet synthase family. As to quaternary structure, homotetramer. Mn(2+) is required as a cofactor. Requires Mg(2+) as cofactor. It depends on Co(2+) as a cofactor. The cofactor is K(+).

The protein resides in the cytoplasm. It carries out the reaction L-methionine + ATP + H2O = S-adenosyl-L-methionine + phosphate + diphosphate. It participates in amino-acid biosynthesis; S-adenosyl-L-methionine biosynthesis; S-adenosyl-L-methionine from L-methionine: step 1/1. Its function is as follows. Catalyzes the formation of S-adenosylmethionine from methionine and ATP. The reaction comprises two steps that are both catalyzed by the same enzyme: formation of S-adenosylmethionine (AdoMet) and triphosphate, and subsequent hydrolysis of the triphosphate. The chain is S-adenosylmethionine synthase (METK) from Musa acuminata (Banana).